We begin with the raw amino-acid sequence, 82 residues long: ATP synthase subunit c (82 aa).

Transmembrane regions (helical) follow at residues 6 to 26 and 57 to 77; these read AAASVIAAALAVGLAAIGPGI and LAFMESLTIYGLLVSIVLLFA.

Belongs to the ATPase C chain family. In terms of assembly, F-type ATPases have 2 components, F(1) - the catalytic core - and F(0) - the membrane proton channel. F(1) has five subunits: alpha(3), beta(3), gamma(1), delta(1), epsilon(1). F(0) has four main subunits: a(1), b(1), b'(1) and c(10-14). The alpha and beta chains form an alternating ring which encloses part of the gamma chain. F(1) is attached to F(0) by a central stalk formed by the gamma and epsilon chains, while a peripheral stalk is formed by the delta, b and b' chains.

It is found in the cell inner membrane. Functionally, f(1)F(0) ATP synthase produces ATP from ADP in the presence of a proton or sodium gradient. F-type ATPases consist of two structural domains, F(1) containing the extramembraneous catalytic core and F(0) containing the membrane proton channel, linked together by a central stalk and a peripheral stalk. During catalysis, ATP synthesis in the catalytic domain of F(1) is coupled via a rotary mechanism of the central stalk subunits to proton translocation. Its function is as follows. Key component of the F(0) channel; it plays a direct role in translocation across the membrane. A homomeric c-ring of between 10-14 subunits forms the central stalk rotor element with the F(1) delta and epsilon subunits. This is ATP synthase subunit c from Gloeobacter violaceus (strain ATCC 29082 / PCC 7421).